The primary structure comprises 231 residues: Protein PIMREG (231 aa).

The disordered stretch occupies residues 1 to 44 (MASQWQGMRTSVRRRSLLKEEQLEKKEVTRSAGGHPETGPLGSL). Phosphoserine occurs at positions 11 and 16. Short sequence motifs (D-box) lie at residues 14 to 17 (RRSL) and 53 to 56 (PLRA). Residues 17–29 (LLKEEQLEKKEVT) show a composition bias toward basic and acidic residues. Serine 72 is modified (phosphoserine). Disordered regions lie at residues 115–138 (KVRRKRGAQKDRGSPPPSLSQKNT) and 152–197 (HLRL…DLEP). Serine 128 carries the phosphoserine; by Uhmk1; in vitro modification. Positions 178-190 (PCSSTEPLCSPSE) are enriched in polar residues. 2 positions are modified to phosphoserine: serine 191 and serine 193.

Interacts with PICALM; this interaction may target PICALM to the nucleus. During mitosis, associates with HDAC2 and MTA2 subunits of the chromatin-remodeling NuRD complex; this association is strongest at prometaphase and decreases as the cell progresses through metaphase and anaphase. Ubiquitinated by the anaphase-promoting complex/cyclosome (APC/C) complex in the presence of FZR1, leading to its degradation by the proteasome during mitotic exit. However, degradation is not essential for normal mitotic progression within a single cell cycle. As to expression, mainly expressed in thymus and ovary. Expressed in all T-cell subpopulations isolated from the thymus, macrophages, pro-erythrocytes, granulocytes, mast cells and progenitor cells.

The protein localises to the nucleus. Its subcellular location is the nucleolus. In terms of biological role, during mitosis, may play a role in the metaphase-to-anaphase transition. The polypeptide is Protein PIMREG (Mus musculus (Mouse)).